Consider the following 176-residue polypeptide: MTDNNIENKEEEIINDIAEEVENTEIADLKAQIEELKDKLIRASAEIDNTRKRLEKARDEARDYAITTFAKELLNVSDNLSRALEHKPLDASVEVTNIIAGVQMTKDELDKVFHKHHIEEIKPEIGSTFDYNLHNAISQIEHPDHEPNSVINIMQVGYRIKDRLLRPATVQVTKKT.

The protein belongs to the GrpE family. As to quaternary structure, homodimer.

The protein localises to the cytoplasm. Its function is as follows. Participates actively in the response to hyperosmotic and heat shock by preventing the aggregation of stress-denatured proteins, in association with DnaK and GrpE. It is the nucleotide exchange factor for DnaK and may function as a thermosensor. Unfolded proteins bind initially to DnaJ; upon interaction with the DnaJ-bound protein, DnaK hydrolyzes its bound ATP, resulting in the formation of a stable complex. GrpE releases ADP from DnaK; ATP binding to DnaK triggers the release of the substrate protein, thus completing the reaction cycle. Several rounds of ATP-dependent interactions between DnaJ, DnaK and GrpE are required for fully efficient folding. The polypeptide is Protein GrpE (Rickettsia bellii (strain OSU 85-389)).